The chain runs to 153 residues: Penitrem biosynthesis cluster 1 protein I (153 aa).

It functions in the pathway secondary metabolite biosynthesis. Part of the gene cluster that mediates the biosynthesis of the indole diterpenes penitrems. The geranylgeranyl diphosphate (GGPP) synthase ptmG catalyzes the first step in penitrem biosynthesis via conversion of farnesyl pyrophosphate and isopentyl pyrophosphate into geranylgeranyl pyrophosphate (GGPP). Condensation of indole-3-glycerol phosphate with GGPP by the prenyl transferase ptmC then forms 3-geranylgeranylindole (3-GGI). Epoxidation by the FAD-dependent monooxygenase ptmM leads to a epoxidized-GGI that is substrate of the terpene cyclase ptmB for cyclization to yield paspaline. Paspaline is subsequently converted to 13-desoxypaxilline by the cytochrome P450 monooxygenase ptmP, the latter being then converted to paxilline by the cytochrome P450 monooxygenase ptmQ. Paxilline is converted to beta-paxitriol via C-10 ketoreduction by the short-chain dehydrogenase ptmH which can be monoprenylated at the C-20 by the indole diterpene prenyltransferase ptmD. A two-step elimination (acetylation and elimination) process performed by the O-acetyltransferase ptmV and ptmI leads to the production of the prenylated form of penijanthine. The FAD-linked oxidoreductase ptmO then converts the prenylated form of penijanthine into PC-M5 which is in turn transformed into PC-M4 by the aromatic dimethylallyltransferase ptmE. Five sequential oxidative transformations performed by the cytochrome P450 monooxygenases ptmK, ptmU, ptmL, ptmN and ptmJ yield the various penitrem compounds. PtmK, ptmU and ptmM are involved in the formation of the key bicyclic ring of penitrem C via the formation of the intermediates secopenitrem D and penitrem D. PtmL catalyzes the epoxidation of penitrem D and C to yield penitrem B and F, respectively. PtmJ catalyzes the last benzylic hydroxylation to convert penitrem B to prenitrem E and penitrem F to penitrem A. This is Penitrem biosynthesis cluster 1 protein I from Penicillium ochrochloron.